A 729-amino-acid polypeptide reads, in one-letter code: ATP-dependent DNA helicase Hel308 (729 aa).

ATP-binding positions include Gln-28 and 46 to 53; that span reads IPTASGKT. In terms of domain architecture, Helicase ATP-binding spans 33–199; sequence EKGLLEGRNL…WLEAELVVSE (167 aa). The short motif at 144-147 is the DEAH box element; it reads DEVH. The 195-residue stretch at 232-426 folds into the Helicase C-terminal domain; it reads AVNLALDTLK…SKLGTENALR (195 aa). The interval 706–729 is disordered; it reads SSGIIASEPPEKSPYSGQKTISDY. The segment covering 720–729 has biased composition (polar residues); sequence YSGQKTISDY.

This sequence belongs to the helicase family. Hel308 subfamily. Monomer.

It catalyses the reaction Couples ATP hydrolysis with the unwinding of duplex DNA by translocating in the 3'-5' direction.. The catalysed reaction is ATP + H2O = ADP + phosphate + H(+). In terms of biological role, DNA-dependent ATPase and 3'-5' DNA helicase that may be involved in repair of stalled replication forks. This is ATP-dependent DNA helicase Hel308 from Methanosarcina barkeri (strain Fusaro / DSM 804).